Here is a 1035-residue protein sequence, read N- to C-terminus: Ephrin type-A receptor 6 (1035 aa).

Residues 1 to 22 form the signal peptide; it reads MGGCEVREFLLQFGFFLPLLTA. The Extracellular portion of the chain corresponds to 23–549; sequence WTGDCSHVSN…MAAEQGQILV (527 aa). The Eph LBD domain maps to 33 to 211; sequence QVVLLDTTTV…FYKKCPFTVR (179 aa). Fibronectin type-III domains follow at residues 330 to 440 and 441 to 536; these read PPSA…TDHD and APSL…TGDE. N-linked (GlcNAc...) asparagine glycosylation is found at Asn-342, Asn-396, and Asn-409. The chain crosses the membrane as a helical span at residues 550–570; the sequence is IATAAVGGFTLLVILTLFFLI. Over 571–1035 the chain is Cytoplasmic; that stretch reads TGRCQWYIKA…MHIQEKGFHV (465 aa). Tyr-605 and Tyr-611 each carry phosphotyrosine; by autocatalysis. In terms of domain architecture, Protein kinase spans 630 to 943; the sequence is IRIERVIGAG…RNPSALHTLV (314 aa). ATP contacts are provided by residues 636–644 and Lys-662; that span reads IGAGEFGEV. Asp-797 serves as the catalytic Proton acceptor. Residues Tyr-830 and Tyr-977 each carry the phosphotyrosine; by autocatalysis modification. The region spanning 960 to 1024 is the SAM domain; it reads PLFVTVGDWL…VSSIQTLRLH (65 aa). The short motif at 1033-1035 is the PDZ-binding element; sequence FHV.

Belongs to the protein kinase superfamily. Tyr protein kinase family. Ephrin receptor subfamily. In terms of assembly, heterotetramer upon binding of the ligand. The heterotetramer is composed of an ephrin dimer and a receptor dimer. Oligomerization is probably required to induce biological responses. Interacts (via SAM domain) with ANKS1A (via SAM domain).

The protein resides in the membrane. The enzyme catalyses L-tyrosyl-[protein] + ATP = O-phospho-L-tyrosyl-[protein] + ADP + H(+). Functionally, receptor tyrosine kinase which binds promiscuously GPI-anchored ephrin-A family ligands residing on adjacent cells, leading to contact-dependent bidirectional signaling into neighboring cells. The signaling pathway downstream of the receptor is referred to as forward signaling while the signaling pathway downstream of the ephrin ligand is referred to as reverse signaling. The polypeptide is Ephrin type-A receptor 6 (Epha6) (Mus musculus (Mouse)).